A 263-amino-acid polypeptide reads, in one-letter code: Thiamine thiazole synthase (263 aa).

NAD(+) is bound by residues S36, 55–56 (ER), G63, V127, and 157–159 (HVD). D159 and H174 together coordinate Fe cation. M228 contacts NAD(+). R238 serves as a coordination point for glycine.

This sequence belongs to the THI4 family. As to quaternary structure, homooctamer; tetramer of dimers. Fe(2+) is required as a cofactor.

It carries out the reaction hydrogen sulfide + glycine + NAD(+) = ADP-5-ethyl-4-methylthiazole-2-carboxylate + nicotinamide + 3 H2O + H(+). It participates in cofactor biosynthesis; thiamine diphosphate biosynthesis. In terms of biological role, involved in the biosynthesis of the thiazole moiety of thiamine. Catalyzes the conversion of NAD and glycine to adenosine diphosphate 5-(2-hydroxyethyl)-4-methylthiazole-2-carboxylate (ADT), an adenylated thiazole intermediate, using free sulfide as a source of sulfur. The protein is Thiamine thiazole synthase of Solidesulfovibrio magneticus (strain ATCC 700980 / DSM 13731 / RS-1) (Desulfovibrio magneticus).